A 476-amino-acid polypeptide reads, in one-letter code: Ribulose bisphosphate carboxylase large chain (476 aa).

Residues 1–2 (MS) constitute a propeptide that is removed on maturation. The residue at position 3 (Pro3) is an N-acetylproline. Lys14 is modified (N6,N6,N6-trimethyllysine). Substrate is bound by residues Asn123 and Thr173. Catalysis depends on Lys175, which acts as the Proton acceptor. Lys177 contributes to the substrate binding site. Mg(2+) is bound by residues Lys201, Asp203, and Glu204. At Lys201 the chain carries N6-carboxylysine. His294 acts as the Proton acceptor in catalysis. The substrate site is built by Arg295, His327, and Ser379.

This sequence belongs to the RuBisCO large chain family. Type I subfamily. As to quaternary structure, heterohexadecamer of 8 large chains and 8 small chains; disulfide-linked. The disulfide link is formed within the large subunit homodimers. The cofactor is Mg(2+). Post-translationally, the disulfide bond which can form in the large chain dimeric partners within the hexadecamer appears to be associated with oxidative stress and protein turnover.

The protein localises to the plastid. It is found in the chloroplast. It catalyses the reaction 2 (2R)-3-phosphoglycerate + 2 H(+) = D-ribulose 1,5-bisphosphate + CO2 + H2O. It carries out the reaction D-ribulose 1,5-bisphosphate + O2 = 2-phosphoglycolate + (2R)-3-phosphoglycerate + 2 H(+). In terms of biological role, ruBisCO catalyzes two reactions: the carboxylation of D-ribulose 1,5-bisphosphate, the primary event in carbon dioxide fixation, as well as the oxidative fragmentation of the pentose substrate in the photorespiration process. Both reactions occur simultaneously and in competition at the same active site. The sequence is that of Ribulose bisphosphate carboxylase large chain from Liriodendron tulipifera (Tuliptree).